We begin with the raw amino-acid sequence, 369 residues long: UDP-N-acetylglucosamine--N-acetylmuramyl-(pentapeptide) pyrophosphoryl-undecaprenol N-acetylglucosamine transferase (369 aa).

Residues 10–12 (TGG), Asn-124, Ser-195, Ile-252, and Gln-297 each bind UDP-N-acetyl-alpha-D-glucosamine.

Belongs to the glycosyltransferase 28 family. MurG subfamily.

The protein localises to the cell membrane. It carries out the reaction Mur2Ac(oyl-L-Ala-gamma-D-Glu-L-Lys-D-Ala-D-Ala)-di-trans,octa-cis-undecaprenyl diphosphate + UDP-N-acetyl-alpha-D-glucosamine = beta-D-GlcNAc-(1-&gt;4)-Mur2Ac(oyl-L-Ala-gamma-D-Glu-L-Lys-D-Ala-D-Ala)-di-trans,octa-cis-undecaprenyl diphosphate + UDP + H(+). Its pathway is cell wall biogenesis; peptidoglycan biosynthesis. Its function is as follows. Cell wall formation. Catalyzes the transfer of a GlcNAc subunit on undecaprenyl-pyrophosphoryl-MurNAc-pentapeptide (lipid intermediate I) to form undecaprenyl-pyrophosphoryl-MurNAc-(pentapeptide)GlcNAc (lipid intermediate II). This Leuconostoc citreum (strain KM20) protein is UDP-N-acetylglucosamine--N-acetylmuramyl-(pentapeptide) pyrophosphoryl-undecaprenol N-acetylglucosamine transferase.